A 173-amino-acid polypeptide reads, in one-letter code: Ribosome maturation factor RimM (173 aa).

The 72-residue stretch at 102 to 173 folds into the PRC barrel domain; the sequence is EGEYYWSDLI…TMLVDWDPEF (72 aa).

This sequence belongs to the RimM family. Binds ribosomal protein uS19.

Its subcellular location is the cytoplasm. Functionally, an accessory protein needed during the final step in the assembly of 30S ribosomal subunit, possibly for assembly of the head region. Essential for efficient processing of 16S rRNA. May be needed both before and after RbfA during the maturation of 16S rRNA. It has affinity for free ribosomal 30S subunits but not for 70S ribosomes. This chain is Ribosome maturation factor RimM, found in Methylobacillus flagellatus (strain ATCC 51484 / DSM 6875 / VKM B-1610 / KT).